Reading from the N-terminus, the 386-residue chain is Acetylornithine aminotransferase (386 aa).

Pyridoxal 5'-phosphate is bound by residues 94-95 (GT) and phenylalanine 121. Arginine 124 contributes to the N(2)-acetyl-L-ornithine binding site. Pyridoxal 5'-phosphate is bound at residue 206 to 209 (DEVQ). An N6-(pyridoxal phosphate)lysine modification is found at lysine 235. Residue serine 263 coordinates N(2)-acetyl-L-ornithine. Residue threonine 264 coordinates pyridoxal 5'-phosphate.

This sequence belongs to the class-III pyridoxal-phosphate-dependent aminotransferase family. ArgD subfamily. In terms of assembly, homodimer. Requires pyridoxal 5'-phosphate as cofactor.

Its subcellular location is the cytoplasm. It carries out the reaction N(2)-acetyl-L-ornithine + 2-oxoglutarate = N-acetyl-L-glutamate 5-semialdehyde + L-glutamate. It participates in amino-acid biosynthesis; L-arginine biosynthesis; N(2)-acetyl-L-ornithine from L-glutamate: step 4/4. This Listeria monocytogenes serovar 1/2a (strain ATCC BAA-679 / EGD-e) protein is Acetylornithine aminotransferase.